A 153-amino-acid chain; its full sequence is Urease accessory protein UreE (153 aa).

Belongs to the UreE family.

Its subcellular location is the cytoplasm. Functionally, involved in urease metallocenter assembly. Binds nickel. Probably functions as a nickel donor during metallocenter assembly. The chain is Urease accessory protein UreE from Acetivibrio thermocellus (strain ATCC 27405 / DSM 1237 / JCM 9322 / NBRC 103400 / NCIMB 10682 / NRRL B-4536 / VPI 7372) (Clostridium thermocellum).